We begin with the raw amino-acid sequence, 248 residues long: PF03932 family protein CutC (248 aa).

It belongs to the CutC family. In terms of assembly, homodimer.

Its subcellular location is the cytoplasm. This chain is PF03932 family protein CutC, found in Salmonella heidelberg (strain SL476).